Consider the following 333-residue polypeptide: Atrochrysone carboxyl ACP thioesterase MYCFIDRAFT_190111 (333 aa).

Zn(2+) is bound by residues His108, His110, Asp112, and His113. Asp112 serves as the catalytic Proton donor/acceptor.

It belongs to the metallo-beta-lactamase superfamily. Requires Zn(2+) as cofactor.

It carries out the reaction atrochrysone carboxyl-[ACP] + H2O = atrochrysone carboxylate + holo-[ACP] + H(+). It participates in secondary metabolite biosynthesis. Its function is as follows. Atrochrysone carboxyl ACP thioesterase; part of the gene cluster that mediates the biosynthesis of an emodin derivative that may be involved in black Sigatoka disease of banana. The pathway begins with the synthesis of atrochrysone thioester by the polyketide synthase PKS8-1. The atrochrysone carboxyl ACP thioesterase MYCFIDRAFT_190111 then breaks the thioester bond and releases the atrochrysone carboxylic acid from PKS8-1. The decarboxylase MYCFIDRAFT_34057 then catalyzes the concerted decarboxylation-elimination required to convert atochrysone carboxylic acid into emodin anthrone, which is further oxidized to emodin by the anthrone oxygenase MYCFIDRAFT_34418. The functions of the other tailoring enzymes as well as the final product of the cluster have still to be identified. The sequence is that of Atrochrysone carboxyl ACP thioesterase MYCFIDRAFT_190111 from Pseudocercospora fijiensis (strain CIRAD86) (Black leaf streak disease fungus).